Here is a 59-residue protein sequence, read N- to C-terminus: Lantibiotic lacticin 3147 A1 (59 aa).

Residues 1 to 29 constitute a propeptide that is removed on maturation; sequence MNKNEIETQPVTWLEEVSDQNFDEDVFGA. A cross-link (lanthionine (Cys-Ser)) is located at residues 30-31; that stretch reads CS. 2 positions are modified to 2,3-didehydrobutyrine: T32 and T34. S36 carries the 2,3-didehydroalanine (Ser) modification. Residues 38–48 constitute a cross-link (lanthionine (Ser-Cys)); the sequence is SDYWGNNGAWC. 2 cross-links (beta-methyllanthionine (Thr-Cys)) span residues 49 to 54 and 51 to 58; these read TLTHEC and THECMAWC.

Post-translationally, maturation of lantibiotics involves the enzymatic conversion of Thr, and Ser into dehydrated AA and the formation of thioether bonds with cysteine. This is followed by membrane translocation and cleavage of the modified precursor. It is not established whether the 2,3-didehydrobutyrines are the E- or Z-isomers. In the NMR model they were assumed to be the Z-isomer.

Its subcellular location is the secreted. Its function is as follows. Lanthionine-containing peptide antibiotic (lantibiotic) active on Gram-positive bacteria. The bactericidal activity of lantibiotics is based on depolarization of energized bacterial cytoplasmic membranes, initiated by the formation of aqueous transmembrane pores. When present individually lacticin 3147 A1 exhibits strong activity towards L.lactis strain AM2, weak activity towards L.lactis strain HP and no activity towards L.lactis strain IFPL359, but when combined with lacticin 3147 A2 it displays strong activity towards all three strains. The polypeptide is Lantibiotic lacticin 3147 A1 (Lactococcus lactis subsp. lactis (Streptococcus lactis)).